The following is a 51-amino-acid chain: Large ribosomal subunit protein eL39 (51 aa).

Belongs to the eukaryotic ribosomal protein eL39 family.

The protein is Large ribosomal subunit protein eL39 of Methanobrevibacter smithii (strain ATCC 35061 / DSM 861 / OCM 144 / PS).